The following is a 225-amino-acid chain: Esterase OVCA2 (225 aa).

Catalysis depends on charge relay system residues S119, D177, and H204.

The protein belongs to the LovG family. In terms of tissue distribution, strongly expressed in kidney and liver. Moderately expressed in brain, skin and testis. Weakly expressed in heart, lung, small intestine, spleen, stomach and thymus.

It carries out the reaction a carboxylic ester + H2O = an alcohol + a carboxylate + H(+). Exhibits ester hydrolase activity with a strong preference for long-chain alkyl ester substrates and high selectivity against a variety of short, branched, and substituted esters. Is able to hydrolyze ester bonds within a wide range of p-nitrophenyl derivatives (C2-C14) in vitro, with a strong preference toward substrates of &gt;8 carbons. The chain is Esterase OVCA2 (Ovca2) from Mus musculus (Mouse).